Reading from the N-terminus, the 105-residue chain is Phosphoribosyl-ATP pyrophosphatase (105 aa).

It belongs to the PRA-PH family.

It is found in the cytoplasm. The catalysed reaction is 1-(5-phospho-beta-D-ribosyl)-ATP + H2O = 1-(5-phospho-beta-D-ribosyl)-5'-AMP + diphosphate + H(+). The protein operates within amino-acid biosynthesis; L-histidine biosynthesis; L-histidine from 5-phospho-alpha-D-ribose 1-diphosphate: step 2/9. The polypeptide is Phosphoribosyl-ATP pyrophosphatase (Methylococcus capsulatus (strain ATCC 33009 / NCIMB 11132 / Bath)).